Reading from the N-terminus, the 167-residue chain is UPF0225 protein VV1358 (167 aa).

Belongs to the UPF0225 family.

In Vibrio vulnificus (strain YJ016), this protein is UPF0225 protein VV1358.